Reading from the N-terminus, the 396-residue chain is S-adenosylmethionine synthase (396 aa).

His16 provides a ligand contact to ATP. Position 18 (Asp18) interacts with Mg(2+). Glu44 serves as a coordination point for K(+). The L-methionine site is built by Glu57 and Gln100. Residues 100–110 (QSPDIAQGVDR) are flexible loop. Residues 167 to 169 (DAK), 232 to 233 (RF), Asp241, 247 to 248 (RK), Ala264, and Lys268 each bind ATP. Position 241 (Asp241) interacts with L-methionine. Lys272 serves as a coordination point for L-methionine.

This sequence belongs to the AdoMet synthase family. As to quaternary structure, homotetramer; dimer of dimers. The cofactor is Mg(2+). K(+) is required as a cofactor.

The protein resides in the cytoplasm. It carries out the reaction L-methionine + ATP + H2O = S-adenosyl-L-methionine + phosphate + diphosphate. The protein operates within amino-acid biosynthesis; S-adenosyl-L-methionine biosynthesis; S-adenosyl-L-methionine from L-methionine: step 1/1. Its function is as follows. Catalyzes the formation of S-adenosylmethionine (AdoMet) from methionine and ATP. The overall synthetic reaction is composed of two sequential steps, AdoMet formation and the subsequent tripolyphosphate hydrolysis which occurs prior to release of AdoMet from the enzyme. The chain is S-adenosylmethionine synthase from Ralstonia nicotianae (strain ATCC BAA-1114 / GMI1000) (Ralstonia solanacearum).